The sequence spans 998 residues: UPF0182 protein AAur_2732 (998 aa).

Transmembrane regions (helical) follow at residues 18–38 (GALTPTLIVVAVAVVGFIFFA), 64–84 (IITFLIGFAMMFAAVFFAIRI), 115–135 (VVMIGLPILFGLFAGSAAASQ), 168–188 (FLGFITGFLISIAVVAGIAGI), 211–231 (QIHIAVTGALFLILLGVNFWL), 260–280 (AILAVAAGLVAILFIIAAIIG), and 287–307 (IGTAMLVITAILAGGVYPWVI). 3 disordered regions span residues 490 to 518 (GAPDGAPNREQDRPAGREGGGETQYTFSG), 888 to 923 (LFGGDSGATAGDSDNNGQTPTSPPGTTPPPAGPTDA), and 971 to 998 (QARLDATPAPTATPGATPSATPSPSPSS). Residues 496-509 (PNREQDRPAGREGG) are compositionally biased toward basic and acidic residues. Over residues 908–919 (TSPPGTTPPPAG) the composition is skewed to pro residues. The segment covering 976–990 (ATPAPTATPGATPSA) has biased composition (low complexity).

The protein belongs to the UPF0182 family.

It localises to the cell membrane. This chain is UPF0182 protein AAur_2732, found in Paenarthrobacter aurescens (strain TC1).